The chain runs to 423 residues: UDP-N-acetylglucosamine 1-carboxyvinyltransferase 2 (423 aa).

Position 23 to 24 (23 to 24 (KN)) interacts with phosphoenolpyruvate. Arginine 96 is a binding site for UDP-N-acetyl-alpha-D-glucosamine. Cysteine 120 (proton donor) is an active-site residue. Residue cysteine 120 is modified to 2-(S-cysteinyl)pyruvic acid O-phosphothioketal. UDP-N-acetyl-alpha-D-glucosamine is bound by residues 125–129 (RPIDL), aspartate 309, and valine 331.

The protein belongs to the EPSP synthase family. MurA subfamily.

Its subcellular location is the cytoplasm. The enzyme catalyses phosphoenolpyruvate + UDP-N-acetyl-alpha-D-glucosamine = UDP-N-acetyl-3-O-(1-carboxyvinyl)-alpha-D-glucosamine + phosphate. Its pathway is cell wall biogenesis; peptidoglycan biosynthesis. Functionally, cell wall formation. Adds enolpyruvyl to UDP-N-acetylglucosamine. This Streptococcus agalactiae serotype III (strain NEM316) protein is UDP-N-acetylglucosamine 1-carboxyvinyltransferase 2.